Consider the following 122-residue polypeptide: MIQQQTMLTVADNTGARKMMCIRVLGSSGRRYASLGDVIIGVVKDALPNMPVKKSDVVKAVVIRTVDTVRRPDGMCIRFDDNAAVIINNDGNPRGTRVFGPVARELREKNFTKIISLAPEVL.

The protein belongs to the universal ribosomal protein uL14 family. As to quaternary structure, part of the 50S ribosomal subunit. Forms a cluster with proteins L3 and L19. In the 70S ribosome, L14 and L19 interact and together make contacts with the 16S rRNA in bridges B5 and B8.

In terms of biological role, binds to 23S rRNA. Forms part of two intersubunit bridges in the 70S ribosome. The sequence is that of Large ribosomal subunit protein uL14 from Synechococcus sp. (strain JA-2-3B'a(2-13)) (Cyanobacteria bacterium Yellowstone B-Prime).